Consider the following 473-residue polypeptide: Probable transporter MCH2 (473 aa).

The Cytoplasmic portion of the chain corresponds to 1–37 (MSEERHEDHHRDVENKLNLNGKDDINGNTSISIEVPD). A helical membrane pass occupies residues 38-58 (GGYGWFILLAFILYNFSTWGA). Topologically, residues 59–83 (NSGYAIYLAHYLENNTFAGGSKLDY) are extracellular. Residue N72 is glycosylated (N-linked (GlcNAc...) asparagine). The helical transmembrane segment at 84-105 (ASIGGLAFSCGLFFAPVITWLY) threads the bilayer. The Cytoplasmic segment spans residues 106–111 (HIFSIQ). The helical transmembrane segment at 112–135 (FIIGLGILFQGAALLLAAFSVTLW) threads the bilayer. The Extracellular portion of the chain corresponds to 136–141 (EIYLTQ). Residues 142–163 (GVLIGFGLAFIFIPSVTLIPLW) form a helical membrane-spanning segment. Residues 164-169 (FRNKRS) are Cytoplasmic-facing. Residues 170-186 (LASGIGTAGSGLGGIVF) traverse the membrane as a helical segment. The Extracellular segment spans residues 187–200 (NLGMQSILQKRGVK). Residues 201-220 (WALIAQCIICTSLSTIALML) traverse the membrane as a helical segment. The Cytoplasmic portion of the chain corresponds to 221–243 (TRTTHQGLRQHKRSYKFELLDYD). A helical transmembrane segment spans residues 244–268 (VLSNFAVWLLFGFVSFAMLGYVVLL). Topologically, residues 269–286 (YSLSDFTVSLGYTSKQGS) are extracellular. A helical membrane pass occupies residues 287 to 304 (YVSCMVSVGSLLGRPIVG). Residues 305–312 (HIADKYGS) lie on the Cytoplasmic side of the membrane. The helical transmembrane segment at 313–332 (LTVGMILHLVMAILCWAMWI) threads the bilayer. At 333 to 342 (PCKNLATAIA) the chain is on the extracellular side. Residues 343–362 (FGLLVGSIMGTIWPTIASIV) form a helical membrane-spanning segment. Residues 363 to 370 (TRIVGLQK) lie on the Cytoplasmic side of the membrane. A helical membrane pass occupies residues 371–394 (LPGTFGSTWIFMAAFALVAPIIGL). The Extracellular segment spans residues 395–408 (ELRSTDTNGNDYYR). A helical transmembrane segment spans residues 409 to 433 (TAIFVGFAYFGVSLCQWLLRGFIIA). The Cytoplasmic portion of the chain corresponds to 434 to 473 (RDEIAVREAYSADQNELHLNVKLSHMSKCLFRYKQLPRRV).

The protein belongs to the major facilitator superfamily. Monocarboxylate porter (TC 2.A.1.13) family.

The protein resides in the membrane. In terms of biological role, probable transporter. Does not act in the transport of monocarboxylic acids across the plasma membrane. The polypeptide is Probable transporter MCH2 (MCH2) (Saccharomyces cerevisiae (strain ATCC 204508 / S288c) (Baker's yeast)).